The sequence spans 313 residues: Aspartate carbamoyltransferase catalytic subunit (313 aa).

Arg-51 and Thr-52 together coordinate carbamoyl phosphate. Residue Lys-80 participates in L-aspartate binding. Positions 101, 129, and 132 each coordinate carbamoyl phosphate. Residues Arg-162 and Arg-224 each contribute to the L-aspartate site. 2 residues coordinate carbamoyl phosphate: Leu-263 and Pro-264.

The protein belongs to the aspartate/ornithine carbamoyltransferase superfamily. ATCase family. In terms of assembly, heterododecamer (2C3:3R2) of six catalytic PyrB chains organized as two trimers (C3), and six regulatory PyrI chains organized as three dimers (R2).

The enzyme catalyses carbamoyl phosphate + L-aspartate = N-carbamoyl-L-aspartate + phosphate + H(+). It participates in pyrimidine metabolism; UMP biosynthesis via de novo pathway; (S)-dihydroorotate from bicarbonate: step 2/3. Functionally, catalyzes the condensation of carbamoyl phosphate and aspartate to form carbamoyl aspartate and inorganic phosphate, the committed step in the de novo pyrimidine nucleotide biosynthesis pathway. This chain is Aspartate carbamoyltransferase catalytic subunit, found in Bacteroides thetaiotaomicron (strain ATCC 29148 / DSM 2079 / JCM 5827 / CCUG 10774 / NCTC 10582 / VPI-5482 / E50).